A 176-amino-acid chain; its full sequence is ATP-dependent protease subunit HslV (176 aa).

T4 is an active-site residue. Na(+)-binding residues include G158, C161, and T164.

It belongs to the peptidase T1B family. HslV subfamily. As to quaternary structure, a double ring-shaped homohexamer of HslV is capped on each side by a ring-shaped HslU homohexamer. The assembly of the HslU/HslV complex is dependent on binding of ATP.

Its subcellular location is the cytoplasm. It catalyses the reaction ATP-dependent cleavage of peptide bonds with broad specificity.. Its activity is regulated as follows. Allosterically activated by HslU binding. Protease subunit of a proteasome-like degradation complex believed to be a general protein degrading machinery. The sequence is that of ATP-dependent protease subunit HslV from Rhizobium meliloti (strain 1021) (Ensifer meliloti).